We begin with the raw amino-acid sequence, 280 residues long: Putative pyruvate, phosphate dikinase regulatory protein (280 aa).

152–159 (GVSRTSKS) lines the ADP pocket.

Belongs to the pyruvate, phosphate/water dikinase regulatory protein family. PDRP subfamily.

It carries out the reaction N(tele)-phospho-L-histidyl/L-threonyl-[pyruvate, phosphate dikinase] + ADP = N(tele)-phospho-L-histidyl/O-phospho-L-threonyl-[pyruvate, phosphate dikinase] + AMP + H(+). The catalysed reaction is N(tele)-phospho-L-histidyl/O-phospho-L-threonyl-[pyruvate, phosphate dikinase] + phosphate + H(+) = N(tele)-phospho-L-histidyl/L-threonyl-[pyruvate, phosphate dikinase] + diphosphate. Functionally, bifunctional serine/threonine kinase and phosphorylase involved in the regulation of the pyruvate, phosphate dikinase (PPDK) by catalyzing its phosphorylation/dephosphorylation. The sequence is that of Putative pyruvate, phosphate dikinase regulatory protein from Anaplasma phagocytophilum (strain HZ).